The chain runs to 969 residues: Isoleucine--tRNA ligase (969 aa).

The short motif at 70–80 is the 'HIGH' region element; that stretch reads PYANGAIHIGH. Glu-601 is a binding site for L-isoleucyl-5'-AMP. The 'KMSKS' region motif lies at 642–646; the sequence is KMSKS. Lys-645 provides a ligand contact to ATP.

This sequence belongs to the class-I aminoacyl-tRNA synthetase family. IleS type 1 subfamily. Monomer.

Its subcellular location is the cytoplasm. It carries out the reaction tRNA(Ile) + L-isoleucine + ATP = L-isoleucyl-tRNA(Ile) + AMP + diphosphate. In terms of biological role, catalyzes the attachment of isoleucine to tRNA(Ile). As IleRS can inadvertently accommodate and process structurally similar amino acids such as valine, to avoid such errors it has two additional distinct tRNA(Ile)-dependent editing activities. One activity is designated as 'pretransfer' editing and involves the hydrolysis of activated Val-AMP. The other activity is designated 'posttransfer' editing and involves deacylation of mischarged Val-tRNA(Ile). The chain is Isoleucine--tRNA ligase from Caulobacter vibrioides (strain ATCC 19089 / CIP 103742 / CB 15) (Caulobacter crescentus).